A 265-amino-acid polypeptide reads, in one-letter code: 2-C-methyl-D-erythritol 4-phosphate cytidylyltransferase (265 aa).

Residues 231-241 (DRGGASREAER) are compositionally biased toward basic and acidic residues. Residues 231-265 (DRGGASREAERSAMPSAATSVFSGARSAASGSEEV) are disordered. A compositionally biased stretch (low complexity) spans 253–265 (SGARSAASGSEEV).

The protein belongs to the IspD/TarI cytidylyltransferase family. IspD subfamily.

It catalyses the reaction 2-C-methyl-D-erythritol 4-phosphate + CTP + H(+) = 4-CDP-2-C-methyl-D-erythritol + diphosphate. Its pathway is isoprenoid biosynthesis; isopentenyl diphosphate biosynthesis via DXP pathway; isopentenyl diphosphate from 1-deoxy-D-xylulose 5-phosphate: step 2/6. In terms of biological role, catalyzes the formation of 4-diphosphocytidyl-2-C-methyl-D-erythritol from CTP and 2-C-methyl-D-erythritol 4-phosphate (MEP). The chain is 2-C-methyl-D-erythritol 4-phosphate cytidylyltransferase from Xanthomonas campestris pv. campestris (strain 8004).